Here is a 131-residue protein sequence, read N- to C-terminus: Profilin-4 (131 aa).

Residues Cys-13 and Cys-115 are joined by a disulfide bond. Residues Val-81–Thr-97 carry the Involved in PIP2 interaction motif. Phosphothreonine is present on Thr-111.

The protein belongs to the profilin family. In terms of assembly, occurs in many kinds of cells as a complex with monomeric actin in a 1:1 ratio. Phosphorylated by MAP kinases. In terms of tissue distribution, expressed predominantly in endosperm but is also found at low levels in all tissues examined, including mature and germinated pollen.

It localises to the cytoplasm. Its subcellular location is the cytoskeleton. Binds to actin and affects the structure of the cytoskeleton. At high concentrations, profilin prevents the polymerization of actin, whereas it enhances it at low concentrations. By binding to PIP2, it inhibits the formation of IP3 and DG. Has a high affinity for poly-proline. This chain is Profilin-4 (PRO4), found in Zea mays (Maize).